The primary structure comprises 207 residues: MGGTMSKCSPVGWPAIRERIRRAAPAAEGVGAASRDLDKYGALTSSNTPANNPDCAWLEAQEEEEEVGFPVRPQVPLRPMTYKAAFDLSLFLKEKGGLEGLIYSKKRQEILDLWVYNTQGFFPDWQNYTPGPGVRYPLTFGWCFKLVPVDPSEVEEINEGENNCLLHPASLHGMEDEDREVLKWKFDSHLARRHMARELHPEYYKDC.

G2 carries the N-myristoyl glycine; by host lipid modification. S6 bears the Phosphoserine; by host mark. An acidic; interacts with host PACS1 and PACS2; stabilizes the interaction of NEF/MHC-I with host AP1M1; necessary for MHC-I internalization region spans residues 62–66; it reads EEEEE. The SH3-binding; interaction with Src family tyrosine kinases stretch occupies residues 70–79; the sequence is PVRPQVPLRP. The short motif at 73–76 is the PxxP; stabilizes the interaction of NEF/MHC-I with host AP1M1; necessary for MHC-I internalization element; sequence PQVP. The mediates dimerization, Nef-PTE1 interaction stretch occupies residues 109-125; it reads EILDLWVYNTQGFFPDW. The segment at 149-181 is binding to ATP6V1H; it reads VDPSEVEEINEGENNCLLHPASLHGMEDEDREV. The Dileucine internalization motif; necessary for CD4 internalization signature appears at 165–166; the sequence is LL. Positions 175-176 match the Diacidic; necessary for CD4 internalization motif; it reads ED.

This sequence belongs to the lentivirus primate group Nef protein family. As to quaternary structure, monomer; cytosolic form. Homodimer; membrane bound form. Interacts with Nef associated p21-activated kinase (PAK2); this interaction activates PAK2. Associates with the Nef-MHC-I-AP1 complex; this complex is required for MHC-I internalization. Interacts (via C-terminus) with host PI3-kinase. Interacts with host PACS1; this interaction seems to be weak. Interacts with host PACS2. Interacts with host LCK and MAPK3; these interactions inhibit the kinase activity of the latter. Interacts with host ATP6V1H; this interaction may play a role in CD4 endocytosis. Associates with the CD4-Nef-AP2 complex; this complex is required for CD4 internalization. Interacts with host AP2 subunit alpha and AP2 subunit sigma2. Interacts with TCR-zeta chain; this interaction up-regulates the Fas ligand (FasL) surface expression. Interacts with host HCK, LYN, and SRC; these interactions activate the Src family kinases. Interacts with MAP3K5; this interaction inhibits the Fas and TNFR-mediated death signals. Interacts with beta-COP and PTE1. Interacts with human RACK1; this increases Nef phosphorylation by PKC. Interacts with TP53; this interaction decreases the half-life of TP53, protecting the infected cell against p53-mediated apoptosis. Post-translationally, the virion-associated Nef proteins are cleaved by the viral protease to release the soluble C-terminal core protein. Nef is probably cleaved concomitantly with viral structural proteins on maturation of virus particles. Myristoylated. In terms of processing, phosphorylated on serine residues, probably by host PKCdelta and theta.

The protein resides in the host cell membrane. Its subcellular location is the virion. The protein localises to the secreted. It is found in the host Golgi apparatus membrane. Functionally, factor of infectivity and pathogenicity, required for optimal virus replication. Alters numerous pathways of T-lymphocyte function and down-regulates immunity surface molecules in order to evade host defense and increase viral infectivity. Alters the functionality of other immunity cells, like dendritic cells, monocytes/macrophages and NK cells. In infected CD4(+) T-lymphocytes, down-regulates the surface MHC-I, mature MHC-II, CD4, CD28, CCR5 and CXCR4 molecules. Mediates internalization and degradation of host CD4 through the interaction of with the cytoplasmic tail of CD4, the recruitment of AP-2 (clathrin adapter protein complex 2), internalization through clathrin coated pits, and subsequent transport to endosomes and lysosomes for degradation. Diverts host MHC-I molecules to the trans-Golgi network-associated endosomal compartments by an endocytic pathway to finally target them for degradation. MHC-I down-regulation may involve AP-1 (clathrin adapter protein complex 1) or possibly Src family kinase-ZAP70/Syk-PI3K cascade recruited by PACS2. In consequence infected cells are masked for immune recognition by cytotoxic T-lymphocytes. Decreasing the number of immune receptors also prevents reinfection by more HIV particles (superinfection). Down-regulates host SERINC3 and SERINC5 thereby excluding these proteins from the viral particles. Virion infectivity is drastically higher when SERINC3 or SERINC5 are excluded from the viral envelope, because these host antiviral proteins impair the membrane fusion event necessary for subsequent virion penetration. In terms of biological role, bypasses host T-cell signaling by inducing a transcriptional program nearly identical to that of anti-CD3 cell activation. Interaction with TCR-zeta chain up-regulates the Fas ligand (FasL). Increasing surface FasL molecules and decreasing surface MHC-I molecules on infected CD4(+) cells send attacking cytotoxic CD8+ T-lymphocytes into apoptosis. Its function is as follows. Plays a role in optimizing the host cell environment for viral replication without causing cell death by apoptosis. Protects the infected cells from apoptosis in order to keep them alive until the next virus generation is ready to strike. Inhibits the Fas and TNFR-mediated death signals by blocking MAP3K5/ASK1. Decreases the half-life of TP53, protecting the infected cell against p53-mediated apoptosis. Inhibits the apoptotic signals regulated by the Bcl-2 family proteins through the formation of a Nef/PI3-kinase/PAK2 complex that leads to activation of PAK2 and induces phosphorylation of host BAD. Functionally, extracellular Nef protein targets CD4(+) T-lymphocytes for apoptosis by interacting with CXCR4 surface receptors. This is Protein Nef from Homo sapiens (Human).